A 69-amino-acid polypeptide reads, in one-letter code: Cytochrome c oxidase subunit 8A, mitochondrial (69 aa).

Residues Met1–Gln25 constitute a mitochondrion transit peptide. Residues Ser2–Leu19 carry the SIFI-degron motif. Topologically, residues Ile26–Gly36 are mitochondrial matrix. Residues Thr37 to Ser60 form a helical membrane-spanning segment. Topologically, residues His61–Glu69 are mitochondrial intermembrane.

Belongs to the cytochrome c oxidase VIII family. Component of the cytochrome c oxidase (complex IV, CIV), a multisubunit enzyme composed of 14 subunits. The complex is composed of a catalytic core of 3 subunits MT-CO1, MT-CO2 and MT-CO3, encoded in the mitochondrial DNA, and 11 supernumerary subunits COX4I, COX5A, COX5B, COX6A, COX6B, COX6C, COX7A, COX7B, COX7C, COX8 and NDUFA4, which are encoded in the nuclear genome. The complex exists as a monomer or a dimer and forms supercomplexes (SCs) in the inner mitochondrial membrane with NADH-ubiquinone oxidoreductase (complex I, CI) and ubiquinol-cytochrome c oxidoreductase (cytochrome b-c1 complex, complex III, CIII), resulting in different assemblies (supercomplex SCI(1)III(2)IV(1) and megacomplex MCI(2)III(2)IV(2)). In terms of processing, in response to mitochondrial stress, the precursor protein is ubiquitinated by the SIFI complex in the cytoplasm before mitochondrial import, leading to its degradation. Within the SIFI complex, UBR4 initiates ubiquitin chain that are further elongated or branched by KCMF1.

Its subcellular location is the mitochondrion inner membrane. Its pathway is energy metabolism; oxidative phosphorylation. Functionally, component of the cytochrome c oxidase, the last enzyme in the mitochondrial electron transport chain which drives oxidative phosphorylation. The respiratory chain contains 3 multisubunit complexes succinate dehydrogenase (complex II, CII), ubiquinol-cytochrome c oxidoreductase (cytochrome b-c1 complex, complex III, CIII) and cytochrome c oxidase (complex IV, CIV), that cooperate to transfer electrons derived from NADH and succinate to molecular oxygen, creating an electrochemical gradient over the inner membrane that drives transmembrane transport and the ATP synthase. Cytochrome c oxidase is the component of the respiratory chain that catalyzes the reduction of oxygen to water. Electrons originating from reduced cytochrome c in the intermembrane space (IMS) are transferred via the dinuclear copper A center (CU(A)) of subunit 2 and heme A of subunit 1 to the active site in subunit 1, a binuclear center (BNC) formed by heme A3 and copper B (CU(B)). The BNC reduces molecular oxygen to 2 water molecules using 4 electrons from cytochrome c in the IMS and 4 protons from the mitochondrial matrix. The chain is Cytochrome c oxidase subunit 8A, mitochondrial (COX8A) from Carlito syrichta (Philippine tarsier).